The chain runs to 573 residues: Potassium-transporting ATPase potassium-binding subunit (573 aa).

A run of 10 helical transmembrane segments spans residues 6 to 26, 66 to 86, 135 to 155, 177 to 197, 257 to 277, 283 to 303, 382 to 402, 428 to 448, 493 to 513, and 537 to 557; these read ILFA…GSYI, FFSL…ILLL, ALAV…IALI, IFWI…FQGV, IQMV…GKWV, GWLI…VMTI, IFGG…LAVF, MFAL…AAVI, ITIA…VIML, and FIFA…TIFP.

The protein belongs to the KdpA family. The system is composed of three essential subunits: KdpA, KdpB and KdpC.

Its subcellular location is the cell inner membrane. Functionally, part of the high-affinity ATP-driven potassium transport (or Kdp) system, which catalyzes the hydrolysis of ATP coupled with the electrogenic transport of potassium into the cytoplasm. This subunit binds the periplasmic potassium ions and delivers the ions to the membrane domain of KdpB through an intramembrane tunnel. This is Potassium-transporting ATPase potassium-binding subunit from Francisella tularensis subsp. novicida (strain U112).